A 304-amino-acid chain; its full sequence is Large ribosomal subunit protein uL18 (304 aa).

The tract at residues 285 to 304 (LNALNSSAGADDDDEEEDDE) is disordered. Over residues 294 to 304 (ADDDDEEEDDE) the composition is skewed to acidic residues.

The protein belongs to the universal ribosomal protein uL18 family. Component of the large ribosomal subunit (LSU).

It is found in the cytoplasm. The protein resides in the nucleus. In terms of biological role, component of the ribosome, a large ribonucleoprotein complex responsible for the synthesis of proteins in the cell. The small ribosomal subunit (SSU) binds messenger RNAs (mRNAs) and translates the encoded message by selecting cognate aminoacyl-transfer RNA (tRNA) molecules. The large subunit (LSU) contains the ribosomal catalytic site termed the peptidyl transferase center (PTC), which catalyzes the formation of peptide bonds, thereby polymerizing the amino acids delivered by tRNAs into a polypeptide chain. The nascent polypeptides leave the ribosome through a tunnel in the LSU and interact with protein factors that function in enzymatic processing, targeting, and the membrane insertion of nascent chains at the exit of the ribosomal tunnel. The chain is Large ribosomal subunit protein uL18 (RPL5A) from Oryza sativa subsp. indica (Rice).